The primary structure comprises 5141 residues: SCO-spondin (5141 aa).

The N-terminal stretch at 1 to 17 is a signal peptide; that stretch reads MLLPALLFGMLWAPANG. Residues 18–102 enclose the EMI domain; that stretch reads HWCEQIETVH…ACCPGWGGIH (85 aa). 4 N-linked (GlcNAc...) asparagine glycosylation sites follow: Asn-88, Asn-130, Asn-150, and Asn-167. In terms of domain architecture, VWFD 1 spans 193 to 364; it reads ATCATWSGFH…RLPGYEPGCL (172 aa). 3 disulfide bridges follow: Cys-195–Cys-325, Cys-217–Cys-363, and Cys-239–Cys-245. A TIL 1 domain is found at 472-527; the sequence is CPGGQLYSDCISSCPPSCSAVAQGEEGSCGKECVSGCECPTGLFWDGALCVPAAHC. One can recognise a VWFD 2 domain in the interval 565–738; sequence AECAVGGDGH…FQVSGDGRCP (174 aa). 2 disulfides stabilise this stretch: Cys-567-Cys-700 and Cys-591-Cys-737. N-linked (GlcNAc...) asparagine glycans are attached at residues Asn-657 and Asn-822. Positions 830–883 constitute a TIL 2 domain; that stretch reads CPGGQVYQECAPACGHYCGEPEDCKELGSCVAGCNCPPGLLWDLEGQCVPPSMC. Asn-895, Asn-949, and Asn-991 each carry an N-linked (GlcNAc...) asparagine glycan. One can recognise a VWFD 3 domain in the interval 1017–1187; sequence GWCQASGAPH…HSWRLNPLCP (171 aa). 3 disulfides stabilise this stretch: Cys-1019/Cys-1151, Cys-1041/Cys-1186, and Cys-1062/Cys-1069. The 57-residue stretch at 1280–1336 folds into the TIL 3 domain; it reads CEGGQVYEPCGSTCPPTCHDHHPELRWHCQAITCVEGCFCPEGTLLHGGTCVELTDC. Asn-1357 is a glycosylation site (N-linked (GlcNAc...) asparagine). LDL-receptor class A domains are found at residues 1380-1417, 1420-1456, 1456-1492, and 1496-1534; these read GCAE…EGCD, VCGE…QGCL, LCPQ…ESCL, and SCTS…VHCS. Disulfide bonds link Cys-1381/Cys-1394, Cys-1388/Cys-1407, Cys-1401/Cys-1416, Cys-1421/Cys-1433, Cys-1428/Cys-1446, Cys-1440/Cys-1455, Cys-1457/Cys-1469, Cys-1464/Cys-1482, Cys-1476/Cys-1491, Cys-1497/Cys-1509, Cys-1504/Cys-1522, and Cys-1516/Cys-1533. Positions 1533-1567 are disordered; that stretch reads CSSPSLPTPPAGIGQNPSTSSPDTSPSPVGSASPA. Positions 1549–1567 are enriched in low complexity; it reads PSTSSPDTSPSPVGSASPA. LDL-receptor class A domains are found at residues 1569–1605 and 1607–1646; these read PCSL…LDCG and PCKL…DVCE. Intrachain disulfides connect Cys-1570–Cys-1582, Cys-1577–Cys-1595, Cys-1589–Cys-1604, Cys-1608–Cys-1621, Cys-1615–Cys-1634, and Cys-1628–Cys-1645. Residues Asn-1655 and Asn-1668 are each glycosylated (N-linked (GlcNAc...) asparagine). The LDL-receptor class A 7 domain occupies 1660–1700; the sequence is PCPEFSCPNGTCIDFLLVCDGSPDCELADETEPSLDEQGCG. Cystine bridges form between Cys-1661-Cys-1671, Cys-1666-Cys-1684, Cys-1678-Cys-1699, Cys-1711-Cys-1747, Cys-1715-Cys-1752, Cys-1726-Cys-1737, Cys-1767-Cys-1964, Cys-1771-Cys-1969, and Cys-1781-Cys-1791. TSP type-1 domains are found at residues 1699 to 1753 and 1755 to 1970; these read CGTW…EACP and DGEW…EPCE. An N-linked (GlcNAc...) asparagine glycan is attached at Asn-1725. N-linked (GlcNAc...) asparagine glycosylation is present at Asn-1814. EGF-like domains follow at residues 1829-1868 and 1869-1895; these read CPLT…GRCV and RPRQ…CQLC. Positions 1970–2030 constitute a VWFC 1 domain; that stretch reads EGCEQWGLTY…GMGESCCHCA (61 aa). Asn-2035 carries an N-linked (GlcNAc...) asparagine glycan. Disulfide bonds link Cys-2070–Cys-2226, Cys-2236–Cys-2248, Cys-2243–Cys-2261, and Cys-2255–Cys-2270. One can recognise an F5/8 type C domain in the interval 2070-2226; it reads CYSPLGLAGL…IFLWVELLGC (157 aa). The disordered stretch occupies residues 2087–2109; that stretch reads PLEHSTRAAPVEAPTAGPGPRED. N-linked (GlcNAc...) asparagine glycans are attached at residues Asn-2130 and Asn-2148. Positions 2235–2271 constitute an LDL-receptor class A 8 domain; it reads LCPGTRHRCANGDCALKGGPCDGAVDCEDGSDEEGCG. The tract at residues 2262-2335 is disordered; sequence EDGSDEEGCG…SPSASEGLLP (74 aa). Residues 2276-2294 are compositionally biased toward polar residues; it reads STASRVHSTARTPALSPTQ. The segment covering 2301 to 2314 has biased composition (basic and acidic residues); that stretch reads HPREGLADMEHQQP. LDL-receptor class A domains follow at residues 2391-2427 and 2448-2484; these read RCGP…QHCA and LCSP…DDCV. 12 disulfides stabilise this stretch: Cys-2392-Cys-2404, Cys-2399-Cys-2417, Cys-2411-Cys-2426, Cys-2449-Cys-2461, Cys-2456-Cys-2474, Cys-2468-Cys-2483, Cys-2486-Cys-2522, Cys-2497-Cys-2501, Cys-2532-Cys-2537, Cys-2552-Cys-2589, Cys-2556-Cys-2594, and Cys-2567-Cys-2579. TSP type-1 domains lie at 2485-2538 and 2540-2595; these read DCVL…QACP and AGAW…QLCP. The TIL 4 domain maps to 2618–2660; it reads PPCPPSCLDPEANRSCSGHCVEGCRCPPGLFLQDSHCLPLSEC. 2 N-linked (GlcNAc...) asparagine glycosylation sites follow: Asn-2630 and Asn-2679. 3 TSP type-1 domains span residues 2700–2754, 2758–2813, and 2815–2868; these read SCGW…TDCG, PGWT…SLCP, and PSAW…HPCT. Disulfide bonds link Cys-2701-Cys-2739, Cys-2712-Cys-2716, Cys-2749-Cys-2753, Cys-2769-Cys-2807, Cys-2773-Cys-2812, Cys-2789-Cys-2797, Cys-2827-Cys-2862, Cys-2831-Cys-2867, and Cys-2842-Cys-2852. Asn-2921 and Asn-2951 each carry an N-linked (GlcNAc...) asparagine glycan. TSP type-1 domains are found at residues 2969–3024 and 3025–3068; these read ACGW…RPCQ and GPGA…QPCA. 3 disulfide bridges follow: Cys-2970-Cys-3008, Cys-2981-Cys-2985, and Cys-3018-Cys-3023. 4 N-linked (GlcNAc...) asparagine glycosylation sites follow: Asn-3046, Asn-3101, Asn-3148, and Asn-3158. The region spanning 3075-3127 is the TIL 5 domain; sequence CPKDQQWLDCAQGPASCAHLSTPREANQTCHPGCYCLSGMLLLNNVCVPAQDC. 2 TSP type-1 domains span residues 3168 to 3235 and 3237 to 3292; these read QPAW…PGCN and AGVW…QPCP. Cystine bridges form between Cys-3180/Cys-3229, Cys-3184/Cys-3234, Cys-3195/Cys-3219, Cys-3249/Cys-3286, Cys-3253/Cys-3291, and Cys-3264/Cys-3276. An N-linked (GlcNAc...) asparagine glycan is attached at Asn-3295. One can recognise a TIL 6 domain in the interval 3300–3350; sequence EGAEYSPCGPPCPRSCDDLVHCMWHCQPGCYCPPGKVLSADGAICVQPHHC. N-linked (GlcNAc...) asparagine glycosylation is present at Asn-3384. TSP type-1 domains are found at residues 3393–3455 and 3457–3512; these read SGDW…TACP and DGAW…TPCT. 6 cysteine pairs are disulfide-bonded: Cys-3405-Cys-3448, Cys-3409-Cys-3454, Cys-3420-Cys-3432, Cys-3469-Cys-3504, Cys-3472-Cys-3511, and Cys-3482-Cys-3494. Residue Asn-3506 is glycosylated (N-linked (GlcNAc...) asparagine). Residues 3514 to 3570 enclose the TIL 7 domain; that stretch reads CGGGQDLLPCGQPCPHSCQDLSLGSTCQPGSSGCQSGCGCPPGQLSQDGLCVFPADC. N-linked (GlcNAc...) asparagine glycosylation is found at Asn-3584 and Asn-3611. Residues 3630–3678 enclose the TSP type-1 14 domain; sequence PGIWSSWGPWEKCSVPCGGGEQLRSRQCARPPCPGLAQQSRTCHIHVCR. Disulfide bonds link Cys-3642-Cys-3672, Cys-3646-Cys-3677, and Cys-3657-Cys-3662. Asn-3787 carries N-linked (GlcNAc...) asparagine glycosylation. 4 TSP type-1 domains span residues 3806–3862, 3876–3928, 3942–3998, and 4000–4055; these read RGYF…PECP, AGGW…PSCT, NCFW…RACP, and PGGW…MPCE. Disulfide bonds link Cys-3818/Cys-3856, Cys-3822/Cys-3861, and Cys-3834/Cys-3846. A glycan (N-linked (GlcNAc...) asparagine) is linked at Asn-3910. Disulfide bonds link Cys-3943/Cys-3979, Cys-3954/Cys-3958, Cys-3992/Cys-3997, Cys-4012/Cys-4049, Cys-4016/Cys-4054, and Cys-4027/Cys-4039. The 56-residue stretch at 4058 to 4113 folds into the TIL 8 domain; it reads CPAGMEMVSCANRCPYSCSDLQEAVMCQEDQACQLGCRCSEGFLEQDGGCVPVGHC. Asn-4135 carries an N-linked (GlcNAc...) asparagine glycan. TSP type-1 domains are found at residues 4155–4208, 4249–4304, 4306–4362, and 4364–4418; these read HCAW…DPCP, PGGW…QLCL, LLEI…GPCQ, and DCMW…GNCS. Disulfide bonds link Cys-4156-Cys-4192, Cys-4167-Cys-4171, Cys-4202-Cys-4207, Cys-4261-Cys-4298, Cys-4265-Cys-4303, and Cys-4276-Cys-4288. An N-linked (GlcNAc...) asparagine glycan is attached at Asn-4345. 3 disulfide bridges follow: Cys-4365–Cys-4402, Cys-4376–Cys-4378, and Cys-4412–Cys-4417. The N-linked (GlcNAc...) asparagine glycan is linked to Asn-4416. Positions 4422–4477 constitute a TIL 9 domain; it reads CLPPFEFQSCGSPCAGLCATHLSHQLCQDLPPCQPGCYCPMGLLEQDGGCILPEQC. N-linked (GlcNAc...) asparagine glycosylation occurs at Asn-4557. The region spanning 4608–4659 is the TSP type-1 23 domain; the sequence is TCQWGPWGPWSPCQVPCSGGFKLRWREASDNSVGECRGPWAQTESCNMGSCP. Intrachain disulfides connect Cys-4609–Cys-4643, Cys-4620–Cys-4624, and Cys-4653–Cys-4658. Residues 4673–4719 form the TIL 10 domain; it reads DCANQCPRSCADLWEGVQCLQGPCSPGCRCPPGQLVQDGHCVPISSC. Asn-4727, Asn-4744, and Asn-4749 each carry an N-linked (GlcNAc...) asparagine glycan. A TSP type-1 24 domain is found at 4759–4812; that stretch reads CPVLGPWSPWSECSAVCGGGTMVRYRSCEEHPDSAPCQALDMEQRVECNLQTCP. Intrachain disulfides connect Cys-4771-Cys-4806, Cys-4775-Cys-4811, and Cys-4786-Cys-4795. The 55-residue stretch at 4814–4868 folds into the TIL 11 domain; that stretch reads CPPGQVLSTCATLCPSFCSHLWPGTICVREPCQLGCGCPGGQLLHSGTCIPPEAC. Residues Asn-4899, Asn-4942, and Asn-4949 are each glycosylated (N-linked (GlcNAc...) asparagine). In terms of domain architecture, TIL 12 spans 4920–4978; the sequence is CPPGEILQLGELRPCEKTCLEMNKTQAWSNCTEAQVPGCVCQLGHFRSHTGLCVPEDHC. The VWFC 2 domain maps to 4978–5036; it reads CECWHHGSPHLPGSEWQEACESCRCLHGKSVCTQHCPELSCAQGEVVVQEPGSCCPICQ. Disulfide bonds link Cys-5047–Cys-5095, Cys-5061–Cys-5112, Cys-5071–Cys-5128, and Cys-5075–Cys-5130. Residues 5047–5134 enclose the CTCK domain; sequence CRHLTELRNL…IHNCHCSACQ (88 aa). Residue Asn-5055 is glycosylated (N-linked (GlcNAc...) asparagine).

This sequence belongs to the thrombospondin family.

Its subcellular location is the secreted. It localises to the extracellular space. Functionally, involved in the modulation of neuronal aggregation. May be involved in developmental events during the formation of the central nervous system. The sequence is that of SCO-spondin from Rattus norvegicus (Rat).